The primary structure comprises 336 residues: Ferrochelatase (336 aa).

Positions 206 and 287 each coordinate Fe cation.

The protein belongs to the ferrochelatase family.

The protein localises to the cytoplasm. The catalysed reaction is heme b + 2 H(+) = protoporphyrin IX + Fe(2+). It participates in porphyrin-containing compound metabolism; protoheme biosynthesis; protoheme from protoporphyrin-IX: step 1/1. In terms of biological role, catalyzes the ferrous insertion into protoporphyrin IX. The sequence is that of Ferrochelatase from Neisseria meningitidis serogroup B (strain ATCC BAA-335 / MC58).